A 201-amino-acid polypeptide reads, in one-letter code: FMN-dependent NADH:quinone oxidoreductase (201 aa).

Residues serine 10, 16-18 (SQS), and 96-99 (MYNF) contribute to the FMN site.

The protein belongs to the azoreductase type 1 family. Homodimer. FMN serves as cofactor.

It carries out the reaction 2 a quinone + NADH + H(+) = 2 a 1,4-benzosemiquinone + NAD(+). The catalysed reaction is N,N-dimethyl-1,4-phenylenediamine + anthranilate + 2 NAD(+) = 2-(4-dimethylaminophenyl)diazenylbenzoate + 2 NADH + 2 H(+). Functionally, quinone reductase that provides resistance to thiol-specific stress caused by electrophilic quinones. Also exhibits azoreductase activity. Catalyzes the reductive cleavage of the azo bond in aromatic azo compounds to the corresponding amines. This is FMN-dependent NADH:quinone oxidoreductase from Sodalis glossinidius (strain morsitans).